Here is a 210-residue protein sequence, read N- to C-terminus: Ribosomal RNA small subunit methyltransferase G (210 aa).

S-adenosyl-L-methionine-binding positions include G76, L81, 127–128 (VE), and R142.

Belongs to the methyltransferase superfamily. RNA methyltransferase RsmG family.

It localises to the cytoplasm. The enzyme catalyses guanosine(527) in 16S rRNA + S-adenosyl-L-methionine = N(7)-methylguanosine(527) in 16S rRNA + S-adenosyl-L-homocysteine. In terms of biological role, specifically methylates the N7 position of guanine in position 527 of 16S rRNA. The sequence is that of Ribosomal RNA small subunit methyltransferase G from Vibrio atlanticus (strain LGP32) (Vibrio splendidus (strain Mel32)).